A 280-amino-acid chain; its full sequence is 2,3,4,5-tetrahydropyridine-2,6-dicarboxylate N-succinyltransferase (280 aa).

Substrate is bound by residues Arg107 and Asp144.

Belongs to the transferase hexapeptide repeat family. Homotrimer.

The protein localises to the cytoplasm. The catalysed reaction is (S)-2,3,4,5-tetrahydrodipicolinate + succinyl-CoA + H2O = (S)-2-succinylamino-6-oxoheptanedioate + CoA. It participates in amino-acid biosynthesis; L-lysine biosynthesis via DAP pathway; LL-2,6-diaminopimelate from (S)-tetrahydrodipicolinate (succinylase route): step 1/3. This Granulibacter bethesdensis (strain ATCC BAA-1260 / CGDNIH1) protein is 2,3,4,5-tetrahydropyridine-2,6-dicarboxylate N-succinyltransferase.